A 285-amino-acid polypeptide reads, in one-letter code: Dermonecrotic toxin LiSicTox-alphaIA2aii (285 aa).

Positions 1-5 (DVEER) are excised as a propeptide. Histidine 17 is a catalytic residue. Glutamate 37 and aspartate 39 together coordinate Mg(2+). Histidine 53 (nucleophile) is an active-site residue. 2 disulfides stabilise this stretch: cysteine 57–cysteine 63 and cysteine 59–cysteine 202. Aspartate 97 is a binding site for Mg(2+). A glycan (N-linked (GlcNAc...) asparagine) is linked at asparagine 262.

The protein belongs to the arthropod phospholipase D family. Class II subfamily. Class IIa sub-subfamily. Mg(2+) is required as a cofactor. In terms of tissue distribution, expressed by the venom gland.

The protein resides in the secreted. The enzyme catalyses an N-(acyl)-sphingosylphosphocholine = an N-(acyl)-sphingosyl-1,3-cyclic phosphate + choline. It catalyses the reaction an N-(acyl)-sphingosylphosphoethanolamine = an N-(acyl)-sphingosyl-1,3-cyclic phosphate + ethanolamine. It carries out the reaction a 1-acyl-sn-glycero-3-phosphocholine = a 1-acyl-sn-glycero-2,3-cyclic phosphate + choline. The catalysed reaction is a 1-acyl-sn-glycero-3-phosphoethanolamine = a 1-acyl-sn-glycero-2,3-cyclic phosphate + ethanolamine. Its function is as follows. Dermonecrotic toxins cleave the phosphodiester linkage between the phosphate and headgroup of certain phospholipids (sphingolipid and lysolipid substrates), forming an alcohol (often choline) and a cyclic phosphate. This toxin acts on sphingomyelin (SM) with high activity. It may also act on ceramide phosphoethanolamine (CPE), lysophosphatidylcholine (LPC) and lysophosphatidylethanolamine (LPE), but not on lysophosphatidylserine (LPS), and lysophosphatidylglycerol (LPG). It acts by transphosphatidylation, releasing exclusively cyclic phosphate products as second products. Shows high hemolytic activity. Induces dermonecrosis, vascular permeability, edema, inflammatory response, and platelet aggregation. Also shows cytotoxicity against renal epithelial cells. In addition, also induces hemolysis in a complement-dependent manner and probably also in a complement-independent manner. The hemolysis provoked in a complement-independent manner may be composed of several steps. The toxin may bind to erythrocyte membranes, may hydrolyze membrane phospholipids (SM and LPC) thus generating metabolism products that may cause hemolysis, probably by provoking an increase of calcium inside cells. The calcium influx may be due to the opening of L-type calcium channels, since L-type calcium channel blockers inhibit calcium influx. In vivo, is lethal to mice when intraperitoneally injected. The protein is Dermonecrotic toxin LiSicTox-alphaIA2aii of Loxosceles intermedia (Brown spider).